Consider the following 340-residue polypeptide: L-threonine 3-dehydrogenase (340 aa).

Cys38 is a Zn(2+) binding site. Catalysis depends on charge relay system residues Thr40 and His43. Zn(2+) is bound by residues His63, Glu64, Cys93, Cys96, Cys99, and Cys107. NAD(+)-binding positions include Ile175, Asp195, Arg200, 261–263 (LGI), and 285–286 (IY).

Belongs to the zinc-containing alcohol dehydrogenase family. Homotetramer. Requires Zn(2+) as cofactor.

The protein resides in the cytoplasm. The catalysed reaction is L-threonine + NAD(+) = (2S)-2-amino-3-oxobutanoate + NADH + H(+). Its pathway is amino-acid degradation; L-threonine degradation via oxydo-reductase pathway; glycine from L-threonine: step 1/2. Functionally, catalyzes the NAD(+)-dependent oxidation of L-threonine to 2-amino-3-ketobutyrate. This chain is L-threonine 3-dehydrogenase, found in Xanthomonas campestris pv. campestris (strain ATCC 33913 / DSM 3586 / NCPPB 528 / LMG 568 / P 25).